A 392-amino-acid chain; its full sequence is Protein FAM53C (392 aa).

M1 bears the N-acetylmethionine mark. Positions 76 to 120 are disordered; the sequence is LHLRPPSPGSSPQEQSLSQVLSPEPPDPEKLPVPPAPPSKRHCRS. The segment covering 85–97 has biased composition (low complexity); sequence SSPQEQSLSQVLS. S122 and S162 each carry phosphoserine. Disordered regions lie at residues 141 to 167 and 201 to 294; these read LWTP…PKRV and DSSH…EDPR. Over residues 201–215 the composition is skewed to polar residues; that stretch reads DSSHPSAASPQSGSW. Phosphoserine is present on residues S232, S234, S255, and S273. Residues 241–256 are compositionally biased toward low complexity; sequence ASRFLPSARSSPASSP. A compositionally biased stretch (basic and acidic residues) spans 278–294; that stretch reads LDARKAGVKRRHEEDPR. The residue at position 299 (S299) is a Phosphoserine.

Belongs to the FAM53 family.

The chain is Protein FAM53C from Bos taurus (Bovine).